A 42-amino-acid polypeptide reads, in one-letter code: DRDSCVDKSRCAKYGYYQECTDCCKKYGHNGGTCMFFKCKCA.

Cystine bridges form between Cys5–Cys23, Cys11–Cys34, Cys20–Cys39, and Cys24–Cys41.

The protein belongs to the ergtoxin family. Gamma-KTx 1 subfamily. Expressed by the venom gland.

The protein localises to the secreted. In terms of biological role, blocks Kv11/ERG potassium channels. The sequence is that of Potassium channel toxin gamma-KTx 1.2 from Centruroides elegans (Bark scorpion).